Reading from the N-terminus, the 251-residue chain is Putative cysteine-rich repeat secretory protein 36 (251 aa).

Residues 1-28 form the signal peptide; sequence MHSSYSLSKCLVCFTILAIQTLIRRVSS. 2 consecutive Gnk2-homologous domains span residues 35–139 and 144–248; these read YLNH…NSPP and YENT…LYPF.

This sequence belongs to the cysteine-rich repeat secretory protein family.

The protein localises to the secreted. The protein is Putative cysteine-rich repeat secretory protein 36 (CRRSP36) of Arabidopsis thaliana (Mouse-ear cress).